The chain runs to 495 residues: Probable biotin-dependent acyl-coenzyme A carboxylase beta3 subunit (495 aa).

A CoA carboxyltransferase N-terminal domain is found at 1-236; that stretch reads MSRITTDQLR…PLPAPQTPAP (236 aa). Residues 242-470 form the CoA carboxyltransferase C-terminal domain; sequence TWDSVVASRR…SNAIAAEVHA (229 aa).

It belongs to the AccD/PCCB family. In terms of assembly, the biotin-dependent acyl-CoA carboxylase complex is composed of an AccA protein, which contains the biotin carboxylase (BC) and biotin carboxyl carrier protein (BCCP) domains, and an AccD protein, which contains the carboxyl transferase (CT) domain.

In terms of biological role, component of a biotin-dependent acyl-CoA carboxylase complex. This subunit transfers the CO2 from carboxybiotin to the CoA ester substrate. The protein is Probable biotin-dependent acyl-coenzyme A carboxylase beta3 subunit (accD3) of Mycobacterium bovis (strain ATCC BAA-935 / AF2122/97).